Here is a 61-residue protein sequence, read N- to C-terminus: Small ribosomal subunit protein uS14 (61 aa).

Positions 24, 27, 40, and 43 each coordinate Zn(2+).

The protein belongs to the universal ribosomal protein uS14 family. Zinc-binding uS14 subfamily. Part of the 30S ribosomal subunit. Contacts proteins S3 and S10. It depends on Zn(2+) as a cofactor.

Its function is as follows. Binds 16S rRNA, required for the assembly of 30S particles and may also be responsible for determining the conformation of the 16S rRNA at the A site. This chain is Small ribosomal subunit protein uS14, found in Frankia casuarinae (strain DSM 45818 / CECT 9043 / HFP020203 / CcI3).